The following is a 640-amino-acid chain: DNA mismatch repair protein MutL (640 aa).

2 disordered regions span residues 332 to 353 (PNVQ…FNFP) and 408 to 431 (PAHT…TFHD).

This sequence belongs to the DNA mismatch repair MutL/HexB family.

Functionally, this protein is involved in the repair of mismatches in DNA. It is required for dam-dependent methyl-directed DNA mismatch repair. May act as a 'molecular matchmaker', a protein that promotes the formation of a stable complex between two or more DNA-binding proteins in an ATP-dependent manner without itself being part of a final effector complex. This chain is DNA mismatch repair protein MutL, found in Chloroherpeton thalassium (strain ATCC 35110 / GB-78).